Consider the following 133-residue polypeptide: Profilin-2 (133 aa).

Residues cysteine 13 and cysteine 117 are joined by a disulfide bond. The Involved in PIP2 interaction motif lies at 83 to 99; it reads AVIRGKKGSGGITIKKT. Threonine 113 carries the post-translational modification Phosphothreonine.

The protein belongs to the profilin family. Occurs in many kinds of cells as a complex with monomeric actin in a 1:1 ratio. Post-translationally, phosphorylated by MAP kinases.

The protein resides in the cytoplasm. Its subcellular location is the cytoskeleton. Functionally, binds to actin and affects the structure of the cytoskeleton. At high concentrations, profilin prevents the polymerization of actin, whereas it enhances it at low concentrations. This chain is Profilin-2, found in Corylus avellana (European hazel).